Consider the following 600-residue polypeptide: Leiomodin-1 (600 aa).

The residue at position 12 (S12) is a Phosphoserine. Disordered stretches follow at residues 38 to 61 (VVDPDGSVPVGLRQRNQTEKQSTG), 80 to 324 (MQRE…PLER), and 472 to 573 (DKQR…QEKN). Composition is skewed to basic and acidic residues over residues 80-127 (MQRE…EPKR), 134-240 (FSRD…EKMK), 247-256 (DMKKEDEKVK), 263-292 (DTKKDDEKVKKNEPLHEKEAKDDSKTKTPE), and 472-497 (DKQRQKRLQEQRQAQEAKGEKKDLLE). Phosphoserine occurs at positions 85 and 135. A run of 8 repeats spans residues 165 to 180 (AAVDKKEAGKDGRGEE), 181 to 196 (RAVATKKEEEKKGSDR), 197 to 212 (NTGLSRDKDKKREEMK), 213 to 228 (EVAKKEDDEKVKGERR), 229 to 244 (NTDTRKEGEKMKRAGG), 245 to 260 (NTDMKKEDEKVKRGTG), 261 to 276 (NTDTKKDDEKVKKNEP), and 277 to 293 (LHEKEAKDDSKTKTPEK). Residues 165-293 (AAVDKKEAGK…DDSKTKTPEK (129 aa)) form an 8 X approximate tandem repeats region. The interval 508-527 (SPKPSPQPSPKPSPKNSPKK) is 5 X 4 AA approximate tandem repeats. Composition is skewed to pro residues over residues 510 to 522 (KPSPQPSPKPSPK) and 532 to 543 (AAPPPPPPPLAP). Residue S555 is modified to Phosphoserine. A WH2 domain is found at 574-593 (SRDQLLAAIRSSNLKQLKKV).

The protein belongs to the tropomodulin family. Detected in lung vascular smooth muscle (at protein level). Detected in thyroid and extraocular smooth muscle, but not skeletal muscle. Detected in heart, aorta, skeletal muscle, colon, urinary bladder, uterus, stomach, and small intestine.

Its subcellular location is the cytoplasm. The protein resides in the myofibril. The protein localises to the sarcomere. It localises to the cytoskeleton. Its function is as follows. Required for proper contractility of visceral smooth muscle cells. Mediates nucleation of actin filaments. The protein is Leiomodin-1 (LMOD1) of Homo sapiens (Human).